Consider the following 462-residue polypeptide: Proline--tRNA ligase (462 aa).

Belongs to the class-II aminoacyl-tRNA synthetase family. ProS type 3 subfamily. Homodimer.

It is found in the cytoplasm. It catalyses the reaction tRNA(Pro) + L-proline + ATP = L-prolyl-tRNA(Pro) + AMP + diphosphate. Catalyzes the attachment of proline to tRNA(Pro) in a two-step reaction: proline is first activated by ATP to form Pro-AMP and then transferred to the acceptor end of tRNA(Pro). The sequence is that of Proline--tRNA ligase from Thermoplasma volcanium (strain ATCC 51530 / DSM 4299 / JCM 9571 / NBRC 15438 / GSS1).